The following is a 760-amino-acid chain: Polyribonucleotide nucleotidyltransferase (760 aa).

Residues Asp-492 and Asp-498 each coordinate Mg(2+). Residues Pro-559–Val-618 form the KH domain. The region spanning Gly-628–Gln-702 is the S1 motif domain. The segment at Trp-706–Asn-760 is disordered. A compositionally biased stretch (basic and acidic residues) spans Glu-719–Asn-760.

Belongs to the polyribonucleotide nucleotidyltransferase family. Mg(2+) serves as cofactor.

It localises to the cytoplasm. It carries out the reaction RNA(n+1) + phosphate = RNA(n) + a ribonucleoside 5'-diphosphate. Its function is as follows. Involved in mRNA degradation. Catalyzes the phosphorolysis of single-stranded polyribonucleotides processively in the 3'- to 5'-direction. The protein is Polyribonucleotide nucleotidyltransferase of Nitratidesulfovibrio vulgaris (strain ATCC 29579 / DSM 644 / CCUG 34227 / NCIMB 8303 / VKM B-1760 / Hildenborough) (Desulfovibrio vulgaris).